We begin with the raw amino-acid sequence, 293 residues long: MAITAQQVKELREKTGAGMMDCKKALTETDGDMDKAIDLLREKGIAKAAKKADRIAAEGSTLIKTDGNKGVILEVNSETDFVAKNEGFKELLNTLADHLLANTPADVEEAMGQKMENGSTVEEYITSAVAKIGEKITLRRFTVLTKDDSSAFGAYLHMGGRIGVLTVLNGTTDEETAKDIAMHVAAVNPRYISRDQVSEEETNHERQILTQQALQEGKPENIVAKMVEGRLNKFFEEICLLDQAFVKNPDEKVKQVIAAKNATVQTFVRYEVGEGIEKRQENFAEEVMNQVKK.

An involved in Mg(2+) ion dislocation from EF-Tu region spans residues 79–82 (TDFV). A Phosphoserine modification is found at Ser149.

It belongs to the EF-Ts family.

The protein localises to the cytoplasm. Functionally, associates with the EF-Tu.GDP complex and induces the exchange of GDP to GTP. It remains bound to the aminoacyl-tRNA.EF-Tu.GTP complex up to the GTP hydrolysis stage on the ribosome. The protein is Elongation factor Ts (tsf) of Bacillus subtilis (strain 168).